The chain runs to 303 residues: MNKIAVIGKVFVDIKGTSFAPLHKDAKNVGDITFSNGGTGRNVAQNLAVLGNEVRFISTVTNDQIGVGVLDELKSYGANVDHVEMLEDHGMGMWLAVMDNEGDLQTSISKQPDAKLLEEAILRQSIYALDGVDAVAIDLDLSVTVLERLIHLCRKMELPLFGVCGHLSVIERNRHLLQGFTGFICSREEAEILSDLSIVTVEDAIHVANELAKKGAPFTVVTMSELGAVYVDRRTATSGHVGTKKVKVVDSTGAGDSFFSAVLSELTQEKSAEEALKLGMKVAAEVIASTENGLVPEMLDALQ.

This sequence belongs to the carbohydrate kinase PfkB family. In terms of assembly, homodimer. Requires Mg(2+) as cofactor.

The catalysed reaction is guanosine + ATP = GMP + ADP + H(+). It catalyses the reaction inosine + ATP = IMP + ADP + H(+). Its pathway is purine metabolism; IMP biosynthesis via salvage pathway; IMP from inosine: step 1/1. The protein operates within purine metabolism; GMP biosynthesis via salvage pathway. Its activity is regulated as follows. Kinase activity is stimulated by pyrimidine nucleotides, especially CMP and CTP, and inhibited by AMP, ADP and GMP. Activity is stimulated by potassium or ammonium ions. Its function is as follows. Catalyzes the phosphorylation of guanosine and inosine to GMP and IMP, respectively. Can also use deoxyguanosine. Shows a strong preference for guanosine. dATP, GTP and dGTP can serve as phosphate donors. In Exiguobacterium acetylicum (Brevibacterium acetylicum), this protein is Guanosine-inosine kinase.